The chain runs to 260 residues: 5'-nucleotidase SurE (260 aa).

A divalent metal cation-binding residues include Asp8, Asp9, Ser39, and Asn96.

It belongs to the SurE nucleotidase family. Requires a divalent metal cation as cofactor.

Its subcellular location is the cytoplasm. It carries out the reaction a ribonucleoside 5'-phosphate + H2O = a ribonucleoside + phosphate. Nucleotidase that shows phosphatase activity on nucleoside 5'-monophosphates. This chain is 5'-nucleotidase SurE, found in Moorella thermoacetica (strain ATCC 39073 / JCM 9320).